The chain runs to 688 residues: Methionine--tRNA ligase (688 aa).

The short motif at 13–23 (PYANGQIHIGH) is the 'HIGH' region element. Residues cysteine 144, cysteine 147, cysteine 157, and cysteine 160 each contribute to the Zn(2+) site. The 'KMSKS' region motif lies at 335–339 (KMSKS). Lysine 338 contacts ATP. The tRNA-binding domain maps to 582-688 (DFAKIDLRVA…SGAVPGMRIG (107 aa)).

It belongs to the class-I aminoacyl-tRNA synthetase family. MetG type 1 subfamily. Homodimer. Zn(2+) is required as a cofactor.

It is found in the cytoplasm. It carries out the reaction tRNA(Met) + L-methionine + ATP = L-methionyl-tRNA(Met) + AMP + diphosphate. Is required not only for elongation of protein synthesis but also for the initiation of all mRNA translation through initiator tRNA(fMet) aminoacylation. The chain is Methionine--tRNA ligase from Cupriavidus pinatubonensis (strain JMP 134 / LMG 1197) (Cupriavidus necator (strain JMP 134)).